Here is a 156-residue protein sequence, read N- to C-terminus: Small ribosomal subunit protein uS7 (156 aa).

Belongs to the universal ribosomal protein uS7 family. In terms of assembly, part of the 30S ribosomal subunit. Contacts proteins S9 and S11.

In terms of biological role, one of the primary rRNA binding proteins, it binds directly to 16S rRNA where it nucleates assembly of the head domain of the 30S subunit. Is located at the subunit interface close to the decoding center, probably blocks exit of the E-site tRNA. This Mesomycoplasma hyopneumoniae (strain 232) (Mycoplasma hyopneumoniae) protein is Small ribosomal subunit protein uS7.